The chain runs to 480 residues: Cysteine--tRNA ligase (480 aa).

Residue Cys-27 coordinates Zn(2+). Residues 29–39 (PTVYNYAHIGN) carry the 'HIGH' region motif. 3 residues coordinate Zn(2+): Cys-221, His-246, and Glu-250. Positions 278 to 282 (KMSKS) match the 'KMSKS' region motif. Lys-281 is an ATP binding site.

This sequence belongs to the class-I aminoacyl-tRNA synthetase family. As to quaternary structure, monomer. The cofactor is Zn(2+).

It is found in the cytoplasm. The enzyme catalyses tRNA(Cys) + L-cysteine + ATP = L-cysteinyl-tRNA(Cys) + AMP + diphosphate. This is Cysteine--tRNA ligase from Borreliella afzelii (strain PKo) (Borrelia afzelii).